Here is a 344-residue protein sequence, read N- to C-terminus: D-beta-hydroxybutyrate dehydrogenase, mitochondrial (344 aa).

Residues 1–46 constitute a mitochondrion transit peptide; the sequence is MLTARLSRPLSQLPRKTLNFSDRENGTRGSLLLYSAPFVPVGRRTY. 59–83 is a binding site for NAD(+); it reads LITGCDSGFGFSLAKHLHSEGFLVF. An N6-acetyllysine mark is found at K73 and K97. K103 is modified (N6-acetyllysine; alternate). K103 carries the N6-succinyllysine; alternate modification. K177 carries the post-translational modification N6-acetyllysine. Position 195 (S195) interacts with substrate. Catalysis depends on Y208, which acts as the Proton acceptor. N6-acetyllysine is present on K212. O-linked (GlcNAc) serine glycosylation occurs at S219. S246 is modified (phosphoserine). The residue at position 260 (K260) is an N6-acetyllysine; alternate. K260 is modified (N6-succinyllysine; alternate). K281 carries the N6-acetyllysine modification.

Belongs to the short-chain dehydrogenases/reductases (SDR) family. In terms of assembly, homotetramer.

The protein resides in the mitochondrion inner membrane. It localises to the mitochondrion matrix. It carries out the reaction (R)-3-hydroxybutanoate + NAD(+) = acetoacetate + NADH + H(+). Requires phosphatidylcholine as an allosteric activator for enzymatic activity. The polypeptide is D-beta-hydroxybutyrate dehydrogenase, mitochondrial (Bos taurus (Bovine)).